Here is a 582-residue protein sequence, read N- to C-terminus: Calcium-dependent protein kinase 24 (582 aa).

Positions 1 to 36 (MGSCVSSPLKGSPFGKRPVRRRHSSNSRTSSVPRFD) are disordered. A lipid anchor (N-myristoyl glycine) is attached at Gly-2. The region spanning 66-324 (YDLGKELGRG…VQEVLEHPWI (259 aa)) is the Protein kinase domain. Residues 72-80 (LGRGEFGVT) and Lys-95 each bind ATP. The active-site Proton acceptor is Asp-190. Ser-230 is modified (phosphoserine). The autoinhibitory domain stretch occupies residues 330 to 360 (APNVNLGDNVRTKIQQFLLMNRFKKKVLRIV). 4 EF-hand domains span residues 367-402 (EEIAAIVQMFQTMDTDKNGHLTFEELRDGLKKIGQV), 403-438 (VPDGDVKMLMDAADTDGNGMLSCDEFVTLSIHLKRM), 439-474 (GCDEHLQEAFKYFDKNGNGFIELDELKVALCDDKLG), and 478-513 (GNDQWIKDIFFDVDLNKDGRISFDEFKAMMKSGTDW). 18 residues coordinate Ca(2+): Asp-380, Asp-382, Asn-384, His-386, Glu-391, Asp-416, Asp-418, Asn-420, Met-422, Glu-427, Asp-452, Asn-454, Asn-456, Glu-463, Asp-491, Asn-493, Asp-495, and Arg-497. Phosphoserine is present on Ser-499. Glu-502 contributes to the Ca(2+) binding site.

The protein belongs to the protein kinase superfamily. Ser/Thr protein kinase family. CDPK subfamily.

It is found in the membrane. The catalysed reaction is L-seryl-[protein] + ATP = O-phospho-L-seryl-[protein] + ADP + H(+). It carries out the reaction L-threonyl-[protein] + ATP = O-phospho-L-threonyl-[protein] + ADP + H(+). Its activity is regulated as follows. Activated by calcium. Autophosphorylation may play an important role in the regulation of the kinase activity. In terms of biological role, may play a role in signal transduction pathways that involve calcium as a second messenger. This is Calcium-dependent protein kinase 24 (CPK24) from Arabidopsis thaliana (Mouse-ear cress).